Consider the following 264-residue polypeptide: Beta-carotene isomerase D27, chloroplastic (264 aa).

The transit peptide at 1–47 (MNTKLSLSQTKIFTFTTWFNDTRSGLDRRSSISPTLCSKPVYSGKLK) directs the protein to the chloroplast.

Requires Fe cation as cofactor. As to expression, expressed in hypocotyls and shoots. Expressed at low levels in roots.

The protein localises to the plastid. It is found in the chloroplast. It carries out the reaction all-trans-beta-carotene = 9-cis-beta-carotene. Functionally, involved in strigolactones biosynthesis by catalyzing the isomerization of the C9-C10 double bond in all-trans-beta-carotene leading to 9-cis-beta-carotene and providing the substrate for CCD7. Strigolactones are hormones that inhibit tillering and shoot branching through the MAX-dependent pathway, contribute to the regulation of shoot architectural response to phosphate-limiting conditions and function as rhizosphere signal that stimulates hyphal branching of arbuscular mycorrhizal fungi and trigger seed germination of root parasitic weeds. In Arabidopsis thaliana (Mouse-ear cress), this protein is Beta-carotene isomerase D27, chloroplastic (D27).